The following is a 2259-amino-acid chain: Putative Polycomb group protein ASXL3 (2259 aa).

Residues 10-83 (RTWAEAARLA…KSGLYALRKE (74 aa)) form the HTH HARE-type domain. The disordered stretch occupies residues 181-230 (VVLTPLKVSDEQSDSPSGSESKNGEADSSDKEMKHGQKSPTGKQTSQHLK). Positions 202–215 (KNGEADSSDKEMKH) are enriched in basic and acidic residues. The segment covering 218–227 (KSPTGKQTSQ) has biased composition (polar residues). A DEUBAD domain is found at 253 to 362 (PGSILVNTNL…FERFYGERSG (110 aa)). 10 disordered regions span residues 364–399 (SREE…AQNA), 607–643 (CISE…CTPA), 703–810 (EASP…IPEP), 857–1012 (SEMT…PLKI), 1025–1049 (SQPV…NTGA), 1126–1150 (RLPS…TKME), 1433–1462 (LSGE…GGFV), 1614–1643 (DPMR…GLKA), 1687–1719 (DFPG…TTSP), and 1993–2075 (NMLS…TTKR). 3 stretches are compositionally biased toward polar residues: residues 607–617 (CISETSFSSES), 630–643 (GETQ…CTPA), and 703–717 (EASP…SEAS). The segment covering 722-741 (LPPTSETSSESSMPLTSETP) has biased composition (low complexity). Polar residues-rich tracts occupy residues 770–781 (KSPSGSEEANSP) and 926–945 (QSST…SEPS). Composition is skewed to basic and acidic residues over residues 949–985 (DGIR…DDQS) and 995–1006 (PEKEQPPREEPR). Positions 1034–1043 (RASTSTSVSS) are enriched in low complexity. Residues 1437 to 1448 (NLDNNSGPLNRT) show a composition bias toward polar residues. The span at 1699–1719 (EVTSSASVQPTQTMKPSTTSP) shows a compositional bias: polar residues. Residues 2023–2055 (PLPPPPPPPPPPPPPLALPPPPPPPPPLPPPLP) are compositionally biased toward pro residues. Residues 2221-2258 (ELKCSCRLKAMIVCKGCGAFCHDDCIGPSKLCVACLVV) form a PHD-type; atypical zinc finger.

It belongs to the Asx family. In terms of assembly, core component of the polycomb repressive deubiquitinase (PR-DUB) complex, at least composed of BAP1, one of ASXL1, ASXL2 or (probably) ASXL3, and one of MBD5 or MBD6. Distinct combinations of ASXL and MBD proteins may preferentially bind specific histone modification marks. The PR-DUB core associates with a number of accessory proteins, including FOXK1, FOXK2, KDM1B, HCFC1 and OGT; KDM1B specifically associates with ASXL2 PR-DUB complexes. Interacts (via PHD domain) with MBD5 and MBD6 (via MBD domain); the interaction is probably direct and mediates association of MBD proteins with the PR-DUB core.

Its subcellular location is the nucleus. Functionally, putative Polycomb group (PcG) protein. PcG proteins act by forming multiprotein complexes, which are required to maintain the transcriptionally repressive state of homeotic genes throughout development. PcG proteins are not required to initiate repression, but to maintain it during later stages of development. They probably act via methylation of histones, rendering chromatin heritably changed in its expressibility. Non-catalytic component of the PR-DUB complex, a complex that specifically mediates deubiquitination of histone H2A monoubiquitinated at 'Lys-119' (H2AK119ub1). The PR-DUB complex is an epigenetic regulator of gene expression and acts as a transcriptional coactivator, affecting genes involved in development, cell communication, signaling, cell proliferation and cell viability. ASXL1, ASXL2 and ASXL3 function redundantly in the PR-DUB complex and are essential for chromatin recruitment and transcriptional activation of associated genes. The polypeptide is Putative Polycomb group protein ASXL3 (Asxl3) (Mus musculus (Mouse)).